Reading from the N-terminus, the 322-residue chain is Acetyl-coenzyme A carboxylase carboxyl transferase subunit beta (322 aa).

Positions 24–293 (LWIKCPDTGQ…PAVEEPAVVD (270 aa)) constitute a CoA carboxyltransferase N-terminal domain.

Belongs to the AccD/PCCB family. In terms of assembly, acetyl-CoA carboxylase is a heterohexamer composed of biotin carboxyl carrier protein (AccB), biotin carboxylase (AccC) and two subunits each of ACCase subunit alpha (AccA) and ACCase subunit beta (AccD).

The protein localises to the cytoplasm. The enzyme catalyses N(6)-carboxybiotinyl-L-lysyl-[protein] + acetyl-CoA = N(6)-biotinyl-L-lysyl-[protein] + malonyl-CoA. The protein operates within lipid metabolism; malonyl-CoA biosynthesis; malonyl-CoA from acetyl-CoA: step 1/1. Its function is as follows. Component of the acetyl coenzyme A carboxylase (ACC) complex. Biotin carboxylase (BC) catalyzes the carboxylation of biotin on its carrier protein (BCCP) and then the CO(2) group is transferred by the transcarboxylase to acetyl-CoA to form malonyl-CoA. In Rhodopseudomonas palustris (strain HaA2), this protein is Acetyl-coenzyme A carboxylase carboxyl transferase subunit beta.